The sequence spans 553 residues: Urocanate hydratase (553 aa).

Residues 51–52, glutamine 129, 175–177, glutamate 195, arginine 200, 241–242, 262–266, 272–273, and tyrosine 321 contribute to the NAD(+) site; these read GG, GMG, NA, QTSAH, and YL. Cysteine 409 is a catalytic residue. Glycine 491 is an NAD(+) binding site.

Belongs to the urocanase family. The cofactor is NAD(+).

Its subcellular location is the cytoplasm. It carries out the reaction 4-imidazolone-5-propanoate = trans-urocanate + H2O. The protein operates within amino-acid degradation; L-histidine degradation into L-glutamate; N-formimidoyl-L-glutamate from L-histidine: step 2/3. Catalyzes the conversion of urocanate to 4-imidazolone-5-propionate. This chain is Urocanate hydratase, found in Sphingopyxis alaskensis (strain DSM 13593 / LMG 18877 / RB2256) (Sphingomonas alaskensis).